The primary structure comprises 124 residues: Large ribosomal subunit protein uL18 (124 aa).

The protein belongs to the universal ribosomal protein uL18 family. As to quaternary structure, part of the 50S ribosomal subunit; part of the 5S rRNA/L5/L18/L25 subcomplex. Contacts the 5S and 23S rRNAs.

This is one of the proteins that bind and probably mediate the attachment of the 5S RNA into the large ribosomal subunit, where it forms part of the central protuberance. This chain is Large ribosomal subunit protein uL18, found in Parafrankia sp. (strain EAN1pec).